The following is a 551-amino-acid chain: MKIRHWSALSLFVLPALAQAEALTGEVHRQPLNIQAIVMFLLFVGGTLYITYWASKRTRSRQDYYTAGGRITGFQNGLAIAGDYMSAASFLGISALVYASGYDGLIYSIGFLIGWPIILFLIAERLRNLGRYTFADVASYRLQQRPIRTLSACGSLVVVALYLIAQMVGAGKLIQLLFGLNYHVAVVLVGILMVLYVLFGGMLATTWVQIIKAVMLLSGATFMAIMVMKSVNFNFNTLFSEAVKVHPKGLSIMSPGGLVSDPISALSLGLALMFGTAGLPHILMRFFTVSDAKEARKSVFYATGFIGYFYILTFIIGFGAILLVGPNQTFKDAAGALLGGNNMAAVHLANAVGGSFFLGFISAVAFATILAVVAGLTLAGASAVSHDLYASVIKKGKANERDELRVSKITVIILGIVAIGLGILFEKQNIAFMVGLAFSIAASCNFPIIIISMYWDKLTTRGAMIGGWLGLSTAVILMILGPTIWVTILGHEKPIYPYEYPALFSMIAAFVGTWFFSITDNSETGKQERLLFKSQFVRSQTGLGASKGGAH.

14 helical membrane passes run 5–25, 34–54, 77–97, 104–124, 150–170, 184–204, 207–227, 263–283, 304–324, 356–376, 406–426, 430–450, 469–489, and 498–518; these read HWSA…ALTG, IQAI…TYWA, GLAI…SALV, GLIY…LIAE, LSAC…MVGA, VAVV…GMLA, WVQI…AIMV, ISAL…PHIL, GFIG…ILLV, FFLG…VAGL, VSKI…ILFE, IAFM…PIII, LGLS…VTIL, and YEYP…FFSI.

The protein belongs to the sodium:solute symporter (SSF) (TC 2.A.21) family.

It is found in the cell inner membrane. In terms of biological role, transports acetate. The polypeptide is Cation/acetate symporter ActP (Yersinia pseudotuberculosis serotype IB (strain PB1/+)).